The following is a 115-amino-acid chain: Large ribosomal subunit protein uL22 (115 aa).

The protein belongs to the universal ribosomal protein uL22 family. Part of the 50S ribosomal subunit.

Its function is as follows. This protein binds specifically to 23S rRNA; its binding is stimulated by other ribosomal proteins, e.g. L4, L17, and L20. It is important during the early stages of 50S assembly. It makes multiple contacts with different domains of the 23S rRNA in the assembled 50S subunit and ribosome. Functionally, the globular domain of the protein is located near the polypeptide exit tunnel on the outside of the subunit, while an extended beta-hairpin is found that lines the wall of the exit tunnel in the center of the 70S ribosome. The polypeptide is Large ribosomal subunit protein uL22 (rplV) (Wolbachia pipientis wMel).